The chain runs to 332 residues: Cytoplasmic phosphatidylinositol transfer protein 1 (332 aa).

3 positions are modified to phosphoserine: S119, S270, and S274. Residues 267-285 show a composition bias toward low complexity; it reads SVRSAPSSAPSTPLSTDAP. The interval 267-332 is disordered; it reads SVRSAPSSAP…SDKPCRPKSE (66 aa). Position 278 is a phosphothreonine (T278). The segment covering 322–332 has biased composition (basic and acidic residues); sequence SSDKPCRPKSE.

It belongs to the PtdIns transfer protein family. PI transfer class IIB subfamily. Ubiquitously expressed.

It is found in the cytoplasm. The catalysed reaction is a 1,2-diacyl-sn-glycero-3-phospho-(1D-myo-inositol)(in) = a 1,2-diacyl-sn-glycero-3-phospho-(1D-myo-inositol)(out). The enzyme catalyses a 1,2-diacyl-sn-glycero-3-phosphate(in) = a 1,2-diacyl-sn-glycero-3-phosphate(out). Functionally, catalyzes the transfer of phosphatidylinositol (PI) and phosphatidic acid (PA) between membranes. Binds PA derived from the phospholipase D signaling pathway and among the cellular PA species, preferably binds to the C16:0/16:1 and C16:1/18:1 PA species. In terms of biological role, catalyzes the transfer of phosphatidylinositol between membranes. The sequence is that of Cytoplasmic phosphatidylinositol transfer protein 1 (PITPNC1) from Homo sapiens (Human).